An 890-amino-acid chain; its full sequence is DNA mismatch repair protein MutS (890 aa).

The span at 1–13 (MDKGINLQNDKEP) shows a compositional bias: basic and acidic residues. Positions 1-23 (MDKGINLQNDKEPSPMAEGNPAD) are disordered. ATP is bound at residue 649–656 (GPNMGGKS).

The protein belongs to the DNA mismatch repair MutS family.

Its function is as follows. This protein is involved in the repair of mismatches in DNA. It is possible that it carries out the mismatch recognition step. This protein has a weak ATPase activity. This is DNA mismatch repair protein MutS from Paracidovorax citrulli (strain AAC00-1) (Acidovorax citrulli).